The sequence spans 36 residues: Beta/delta/mu-theraphotoxin-Pv1 (36 aa).

Intrachain disulfides connect Cys-3–Cys-17, Cys-10–Cys-22, and Cys-16–Cys-30. Phe-36 is subject to Phenylalanine amide.

It belongs to the neurotoxin 10 (Hwtx-1) family. Expressed by the venom gland.

The protein resides in the secreted. In terms of biological role, gating-modifier toxin that targets voltage-gated sodium channels. Inhibits the inactivation of Nav1.7/SCN9A. This Poecilotheria vittata (Ghost ornamental tarantula) protein is Beta/delta/mu-theraphotoxin-Pv1.